The chain runs to 307 residues: Mycothiol acetyltransferase (307 aa).

2 consecutive N-acetyltransferase domains span residues 12–152 (TRTD…APIP) and 160–307 (VTLR…YQRS). Glu-43 contacts 1D-myo-inositol 2-(L-cysteinylamino)-2-deoxy-alpha-D-glucopyranoside. Residue 87–89 (LAV) coordinates acetyl-CoA. Glu-187, Lys-227, and Glu-239 together coordinate 1D-myo-inositol 2-(L-cysteinylamino)-2-deoxy-alpha-D-glucopyranoside. Acetyl-CoA-binding positions include 243–245 (LGV) and 250–256 (HGGGLGK). Position 278 (Tyr-278) interacts with 1D-myo-inositol 2-(L-cysteinylamino)-2-deoxy-alpha-D-glucopyranoside.

The protein belongs to the acetyltransferase family. MshD subfamily. As to quaternary structure, monomer.

It carries out the reaction 1D-myo-inositol 2-(L-cysteinylamino)-2-deoxy-alpha-D-glucopyranoside + acetyl-CoA = mycothiol + CoA + H(+). Catalyzes the transfer of acetyl from acetyl-CoA to desacetylmycothiol (Cys-GlcN-Ins) to form mycothiol. In Salinispora arenicola (strain CNS-205), this protein is Mycothiol acetyltransferase.